The sequence spans 330 residues: Induced myeloid leukemia cell differentiation protein Mcl-1 homolog (330 aa).

Positions 85-155 are PEST-like; sequence LAVPPEEMAA…PPEEEDDELY (71 aa). Phosphoserine is present on Ser-101. A Glycyl lysine isopeptide (Lys-Gly) (interchain with G-Cter in ubiquitin) cross-link involves residue Lys-116. Positions 129-153 are disordered; it reads EAAKSSGADGSLPSTPPPPEEEDDE. Phosphoserine; by GSK3-alpha and GSK3-beta is present on Ser-139. Ser-142 is subject to Phosphoserine. The residue at position 143 (Thr-143) is a Phosphothreonine; by MAPK. Glycyl lysine isopeptide (Lys-Gly) (interchain with G-Cter in ubiquitin) cross-links involve residues Lys-174 and Lys-177. A BH3 motif is present at residues 189–203; sequence ALETLRRVGDGVQRN. Positions 232–252 match the BH1 motif; it reads HVFKDGVTNWGRIVTLISFGA. Residues 284–299 carry the BH2 motif; that stretch reads DWLVKQRGWDGFVEFF. Residues 307–329 form a helical membrane-spanning segment; that stretch reads GIRNVLLAFAGVAGVGAGLAYLI.

It belongs to the Bcl-2 family. As to quaternary structure, interacts with HIF3A (via C-terminus domain). Interacts with BOK, BIK, BAX, BAK1, and TPT1. Interacts with unphosphorylated BAD. Interacts with BMF, BBC3 and PMAIP1. Interacts with BOP. Interacts with BCL2L11; may sequester BCL2L11 to prevent its pro-apoptotic activity. Interacts with GIMAP5 and HSPA8/HSC70; the interaction between HSPA8 and MCL1 is impaired in the absence of GIMAP5. In terms of processing, cleaved by CASP3 during apoptosis, yielding a pro-apoptotic C-terminal fragment. Post-translationally, rapidly degraded in the absence of phosphorylation in the PEST region. Phosphorylated on Ser-139, by GSK3, in response to IL3/interleukin-3 withdrawal. Phosphorylation at Ser-139 induces ubiquitination and proteasomal degradation, abrogating the anti-apoptotic activity. Treatment with taxol or okadaic acid induces phosphorylation on additional sites. In terms of processing, ubiquitinated. Ubiquitination is induced by phosphorylation at Ser-139. Deubiquitinated by USP20; leading to increased stability. Ubiquitous. Highly expressed in heart, spleen, lung, liver, skeletal muscle and kidney. Detected at lower levels in brain, ovary, oviduct and testis.

It is found in the membrane. It localises to the cytoplasm. The protein localises to the mitochondrion. The protein resides in the nucleus. Its subcellular location is the nucleoplasm. Involved in the regulation of apoptosis versus cell survival, and in the maintenance of viability but not of proliferation. Mediates its effects by interactions with a number of other regulators of apoptosis. The chain is Induced myeloid leukemia cell differentiation protein Mcl-1 homolog (Mcl1) from Rattus norvegicus (Rat).